The sequence spans 93 residues: Envelope small membrane protein (93 aa).

Over 1-11 (MMNLLNKSLEE) the chain is Virion surface. The chain crosses the membrane as a helical span at residues 12-32 (NGSVLTAFYIFVAFVALYLLG). Over 33–93 (RALQAFVQAA…NEFPKNGWKQ (61 aa)) the chain is Intravirion.

Belongs to the gammacoronaviruses E protein family. As to quaternary structure, homooligomer. Interacts with the M membrane protein in the budding compartment of the host cell, which is located between endoplasmic reticulum and the Golgi complex. The cytoplasmic tails of both proteins are important for this function. Interacts with Nucleoprotein.

It localises to the host Golgi apparatus membrane. In terms of biological role, plays a central role in virus morphogenesis and assembly. Acts as a viroporin and self-assembles in host membranes forming pentameric protein-lipid pores that allow ion transport. Also plays a role in the induction of apoptosis. This chain is Envelope small membrane protein, found in Avian infectious bronchitis virus (strain Portugal/322/82) (IBV).